The primary structure comprises 478 residues: Patatin-like phospholipase domain-containing protein 2 (478 aa).

Residues 1–8 (MFPRETKW) lie on the Cytoplasmic side of the membrane. A helical transmembrane segment spans residues 9–29 (NISFAGCGFLGVYHIGVASCL). One can recognise a PNPLA domain in the interval 10 to 179 (ISFAGCGFLG…SDNLPLYELK (170 aa)). Positions 14-19 (GCGFLG) match the GXGXXG motif. Residues 30 to 42 (REHAPFLVANATH) lie on the Extracellular side of the membrane. The N-linked (GlcNAc...) asparagine glycan is linked to Asn-39. Residues 43-63 (IYGASAGALTATALVTGACLG) form a helical membrane-spanning segment. The GXSXG signature appears at 45 to 49 (GASAG). Catalysis depends on Ser-47, which acts as the Nucleophile. At 64 to 137 (EAGANIIEVS…IISHFSSKDE (74 aa)) the chain is on the cytoplasmic side. A Glycyl lysine isopeptide (Lys-Gly) (interchain with G-Cter in ubiquitin) cross-link involves residue Lys-92. A helical transmembrane segment spans residues 138 to 158 (LIQANVCSTFIPVYCGLIPPT). Over 159 to 323 (LQGVRYVDGG…TTLSNMLPVR (165 aa)) the chain is Extracellular. Catalysis depends on Asp-166, which acts as the Proton acceptor. The DGA/G motif lies at 166–168 (DGG). The helical transmembrane segment at 324–344 (LATAMMVPYTLPLESAVSFTI) threads the bilayer. Topologically, residues 345–478 (RLLEWLPDVP…PQDPSGLPPC (134 aa)) are cytoplasmic. Phosphoserine; in vitro is present on Ser-366. The residue at position 388 (Ser-388) is a Phosphoserine; by PKA. Ser-398 and Ser-422 each carry phosphoserine. Residues 456-478 (RAPASPTATDPATPQDPSGLPPC) are disordered. The segment covering 457–478 (APASPTATDPATPQDPSGLPPC) has biased composition (low complexity). Ser-460 carries the post-translational modification Phosphoserine; in vitro.

Interacts with ABHD5; this association stimulates PNPLA2 triglyceride hydrolase activity. Interacts with SERPINF1; this interaction stimulates the phospholipase A2 activity of PNPLA2. Despite a colocalization in lipid droplets, it probably does not interact with PLIN. Interacts with PLIN5; prevents interaction with ABHD5. Interacts with FAF2. In terms of processing, phosphorylation at Ser-398 by PKA is increased during fasting and moderate intensity exercise, and moderately increases lipolytic activity. Post-translationally, ubiquitinated by PEX2 in response to reactive oxygen species (ROS), leading to its degradation. Ubiquitination is stimulated by LDAH.

The protein resides in the lipid droplet. Its subcellular location is the cell membrane. It is found in the cytoplasm. It carries out the reaction a triacylglycerol + H2O = a diacylglycerol + a fatty acid + H(+). It catalyses the reaction a triacylglycerol + H2O = a 1,2-diacylglycerol + a fatty acid + H(+). The enzyme catalyses a triacylglycerol + H2O = a 1,3-diacylglycerol + a fatty acid + H(+). The catalysed reaction is a triacyl-sn-glycerol + H2O = a 1,3-diacyl-sn-glycerol + a fatty acid + H(+). It carries out the reaction a triacyl-sn-glycerol + H2O = a 2,3-diacyl-sn-glycerol + a fatty acid + H(+). It catalyses the reaction a 1-acylglycerol + a 1,3-diacylglycerol = a triacylglycerol + glycerol. The enzyme catalyses a 1-acylglycerol + a 1,2-diacylglycerol = a triacylglycerol + glycerol. The catalysed reaction is 2 a 1-acylglycerol = a 1,2-diacylglycerol + glycerol. It carries out the reaction a triacylglycerol + all-trans-retinol = an all-trans-retinyl ester + a diacylglycerol. It catalyses the reaction 1,2-di-(9Z-octadecenoyl)-glycerol + (9Z)-octadecenoate + H(+) = 1,2,3-tri-(9Z-octadecenoyl)-glycerol + H2O. The enzyme catalyses 1,2,3-tri-(9Z-octadecenoyl)-glycerol + H2O = 1,3-di-(9Z-octadecenoyl)-glycerol + (9Z)-octadecenoate + H(+). The catalysed reaction is 1-(9Z-octadecenoyl)-glycerol + 1,3-di-(9Z-octadecenoyl)-glycerol = 1,2,3-tri-(9Z-octadecenoyl)-glycerol + glycerol. It carries out the reaction 1-(9Z-octadecenoyl)-glycerol + 1,2-di-(9Z-octadecenoyl)-glycerol = 1,2,3-tri-(9Z-octadecenoyl)-glycerol + glycerol. It catalyses the reaction 2 1-(9Z-octadecenoyl)-glycerol = 1,2-di-(9Z-octadecenoyl)-glycerol + glycerol. The enzyme catalyses 1,2,3-tri-(9Z-octadecenoyl)-glycerol + all-trans-retinol = all-trans-retinyl 9Z-octadecenoate + di-(9Z)-octadecenoylglycerol. The catalysed reaction is 1,2,3-tri-(9Z)-hexadecenoylglycerol + H2O = 1,3-di-(9Z)-hexadecenoylglycerol + (9Z)-hexadecenoate + H(+). It carries out the reaction 1,2,3-tri-(9Z,12Z)-octadecadienoylglycerol + H2O = 1,3-di-(9Z,12Z)-octadecadienoylglycerol + (9Z,12Z)-octadecadienoate + H(+). It catalyses the reaction 1,2,3-tri-(9Z,12Z,15Z)-octadecatrienoylglycerol + H2O = 1,3-di-(9Z,12Z,15Z)-octadecatrienoylglycerol + (9Z,12Z,15Z)-octadecatrienoate + H(+). The enzyme catalyses 1,3-di-(9Z)-octadecenoyl-2-hexadecanoylglycerol + H2O = 1,3-di-(9Z-octadecenoyl)-glycerol + hexadecanoate + H(+). The catalysed reaction is 1,2-di-(9Z)-octadecenoyl-3-hexadecanoyl-sn-glycerol + H2O = 1-(9Z)-octadecenoyl-3-hexadecanoyl-sn-glycerol + (9Z)-octadecenoate + H(+). It carries out the reaction 1-hexadecanoyl-2,3-di-(9Z)-octadecenoyl-sn-glycerol + H2O = 1-hexadecanoyl-3-(9Z)-octadecenoyl-sn-glycerol + (9Z)-octadecenoate + H(+). It catalyses the reaction 1,2,3-tri-(9Z-octadecenoyl)-glycerol + H2O = 2,3-di-(9Z)-octadecenoyl-sn-glycerol + (9Z)-octadecenoate + H(+). The enzyme catalyses 1,2,3-tri-(9Z)-hexadecenoylglycerol + H2O = 2,3-di-(9Z)-hexadecenoyl-sn-glycerol + (9Z)-hexadecenoate + H(+). The catalysed reaction is 1,2,3-tri-(9Z,12Z)-octadecadienoylglycerol + H2O = 2,3-di-(9Z,12Z)-octadecadienoyl-sn-glycerol + (9Z,12Z)-octadecadienoate + H(+). It carries out the reaction 1,2,3-tri-(9Z,12Z,15Z)-octadecatrienoylglycerol + H2O = 2,3-di-(9Z,12Z,15Z)-octadecatrienoyl-sn-glycerol + (9Z,12Z,15Z)-octadecatrienoate + H(+). It catalyses the reaction 1,3-di-(9Z)-octadecenoyl-2-hexadecanoylglycerol + H2O = 2-hexadecanoyl-3-(9Z)-octadecenoyl-sn-glycerol + (9Z)-octadecenoate + H(+). The enzyme catalyses 1-hexadecanoyl-2,3-di-(9Z)-octadecenoyl-sn-glycerol + H2O = 2,3-di-(9Z)-octadecenoyl-sn-glycerol + hexadecanoate + H(+). The catalysed reaction is 1,2-di-(9Z)-octadecenoyl-3-hexadecanoyl-sn-glycerol + H2O = 2-(9Z-octadecenoyl)-3-hexadecanoyl-sn-glycerol + (9Z)-octadecenoate + H(+). It carries out the reaction a 1,2-diacyl-sn-glycero-3-phosphocholine + H2O = a 1-acyl-sn-glycero-3-phosphocholine + a fatty acid + H(+). It catalyses the reaction 1,2,3-tri-(9Z-octadecenoyl)-glycerol + 9-hydroxy-octadecanoate = 9-(9Z-octadecenoyloxy)-octadecanoate + 2,3-di-(9Z)-octadecenoyl-sn-glycerol. The enzyme catalyses 1-hexadecanoyl-2,3-di-(9Z)-octadecenoyl-sn-glycerol + 9-hydroxy-octadecanoate = 9-hexadecanoyloxy-octadecanoate + 2,3-di-(9Z)-octadecenoyl-sn-glycerol. The catalysed reaction is 1,2,3-tri-(10Z)-heptadecenoylglycerol + 9-hydroxy-octadecanoate = 2,3-di-(10Z-heptadecenoyl)-sn-glycerol + 9-(10Z-heptadecenoyloxy)-octadecanoate. It carries out the reaction 1,2,3-tri-(9Z,12Z)-octadecadienoylglycerol + 9-hydroxy-octadecanoate = 2,3-di-(9Z,12Z)-octadecadienoyl-sn-glycerol + 9-(9Z,12Z-octadecadienoyloxy)-octadecanoate. It catalyses the reaction 1,2,3-tri-(9Z)-hexadecenoylglycerol + 9-hydroxy-octadecanoate = 2,3-di-(9Z)-hexadecenoyl-sn-glycerol + 9-(9Z-hexadecenoyloxy)-octadecanoate. The enzyme catalyses 9-hydroxy-octadecanoate + 1,2-di-(9Z-octadecenoyl)-sn-glycerol = 9-(9Z-octadecenoyloxy)-octadecanoate + 2-(9Z-octadecenoyl)-glycerol. The catalysed reaction is 1-hexadecanoyl-2,3-di-(9Z)-octadecenoyl-sn-glycerol + 9-hydroxy-octadecanoate = 1-hexadecanoyl-3-(9Z)-octadecenoyl-sn-glycerol + 9-(9Z-octadecenoyloxy)-octadecanoate. The protein operates within glycerolipid metabolism; triacylglycerol degradation. Catalyzes the initial step in triglyceride hydrolysis in adipocyte and non-adipocyte lipid droplets. Exhibits a strong preference for the hydrolysis of long-chain fatty acid esters at the sn-2 position of the glycerol backbone and acts coordinately with LIPE/HLS and DGAT2 within the lipolytic cascade. Also possesses acylglycerol transacylase and phospholipase A2 activities. Transfers fatty acid from triglyceride to retinol, hydrolyzes retinylesters, and generates 1,3-diacylglycerol from triglycerides. Regulates adiposome size and may be involved in the degradation of adiposomes. Catalyzes the formation of an ester bond between hydroxy fatty acids and fatty acids derived from triglycerides or diglycerides to generate fatty acid esters of hydroxy fatty acids (FAHFAs) in adipocytes. Acts antagonistically with LDAH in regulation of cellular lipid stores. Inhibits LDAH-stimulated lipid droplet fusion. May play an important role in energy homeostasis. May play a role in the response of the organism to starvation, enhancing hydrolysis of triglycerides and providing free fatty acids to other tissues to be oxidized in situations of energy depletion. This chain is Patatin-like phospholipase domain-containing protein 2, found in Rattus norvegicus (Rat).